The primary structure comprises 103 residues: PTS system lactose-specific EIIA component (103 aa).

The region spanning 1-102 (MNREEVQLLG…MKHLLEFYKR (102 aa)) is the PTS EIIA type-3 domain. Catalysis depends on histidine 78, which acts as the Tele-phosphohistidine intermediate. Phosphohistidine; by HPr is present on histidine 78. Residue aspartate 81 participates in Mg(2+) binding.

As to quaternary structure, homotrimer. Mg(2+) serves as cofactor.

The protein resides in the cytoplasm. The phosphoenolpyruvate-dependent sugar phosphotransferase system (sugar PTS), a major carbohydrate active transport system, catalyzes the phosphorylation of incoming sugar substrates concomitantly with their translocation across the cell membrane. The enzyme II LacEF PTS system is involved in lactose transport. The sequence is that of PTS system lactose-specific EIIA component from Staphylococcus aureus (strain COL).